The following is a 305-amino-acid chain: RxLR effector protein 17 (305 aa).

The signal sequence occupies residues 1–24 (MQSILWFALIASVVFLVLVDLASG). The RxLR-dEER motif lies at 45–60 (RLLRAAHLDRKLSEER). N-linked (GlcNAc...) asparagine glycans are attached at residues Asn207 and Asn227. The segment at 247–269 (LHLKWAVEAKSPKDVVERILKDL) is w motif.

The protein belongs to the RxLR effector family. As to quaternary structure, interacts with host A.thaliana At1G14340.

It localises to the secreted. It is found in the host cell membrane. Functionally, secreted effector that confers enhanced plant susceptibility during both compatible and incompatible interactions between the pathogen and its host. Promotes the sexual reproduction of the pathogen in the plant host. The sequence is that of RxLR effector protein 17 from Hyaloperonospora arabidopsidis (strain Emoy2) (Downy mildew agent).